A 569-amino-acid polypeptide reads, in one-letter code: Synaptotagmin-4 (569 aa).

Residues Met1–Phe21 traverse the membrane as a helical segment. An SMP-LTD domain is found at Gln67 to Leu251. The interval Glu229–Thr531 is phospholipid binding. C2 domains follow at residues Arg245 to Leu366 and Thr426 to Phe543. Positions 459, 465, 514, 516, and 521 each coordinate Ca(2+).

Belongs to the synaptotagmin family. The cofactor is Ca(2+).

Its subcellular location is the membrane. In terms of biological role, may be involved in membrane trafficking. The sequence is that of Synaptotagmin-4 (SYT4) from Arabidopsis thaliana (Mouse-ear cress).